The chain runs to 189 residues: MAALRMLWMGLVLLGLLGFPQTPAQGHDTVQPNFQQDKFLGRWYSAGLASNSSWFREKKAVLYMCKTVVAPSTEGGLNLTSTFLRKNQCETKIMVLQPAGAPGHYTYSSPHSGSIHSVSVVEANYDEYALLFSRGTKGPGQDFRMATLYSRTQTLKDELKEKFTTFSKAQGLTEEDIVFLPQPDKCIQE.

Positions 1-24 (MAALRMLWMGLVLLGLLGFPQTPA) are cleaved as a signal peptide. Glutamine 25 is subject to Pyrrolidone carboxylic acid. N-linked (GlcNAc...) asparagine glycosylation occurs at asparagine 51. Catalysis depends on cysteine 65, which acts as the Nucleophile. N-linked (GlcNAc...) asparagine glycosylation occurs at asparagine 78. A disulfide bond links cysteine 89 and cysteine 186.

It belongs to the calycin superfamily. Lipocalin family. Monomer. Abundant in the brain and CNS, where it is expressed in tissues of the blood-brain barrier and secreted into the cerebro-spinal fluid. In the male reproductive system, it is expressed in the testis, efferent ducts and epididymis, and is secreted into the seminal fluid. In the eye, it is expressed in the pigmented epithelium of the retina and the nonpigmented epithelium of the ciliary body, and secreted into the aqueous humor. Low levels detected in various tissue fluids such as serum, normal urine, ascitic fluid and tear fluid. Also found in a number of other organs including the ear, heart and lung.

The protein localises to the rough endoplasmic reticulum. It is found in the nucleus membrane. It localises to the golgi apparatus. Its subcellular location is the cytoplasm. The protein resides in the perinuclear region. The protein localises to the secreted. It catalyses the reaction prostaglandin H2 = prostaglandin D2. Its function is as follows. Catalyzes the conversion of PGH2 to PGD2, a prostaglandin involved in smooth muscle contraction/relaxation and a potent inhibitor of platelet aggregation. Involved in a variety of CNS functions, such as sedation, NREM sleep and PGE2-induced allodynia, and may have an anti-apoptotic role in oligodendrocytes. Binds small non-substrate lipophilic molecules, including biliverdin, bilirubin, retinal, retinoic acid and thyroid hormone, and may act as a scavenger for harmful hydrophobic molecules and as a secretory retinoid and thyroid hormone transporter. Possibly involved in development and maintenance of the blood-brain, blood-retina, blood-aqueous humor and blood-testis barrier. It is likely to play important roles in both maturation and maintenance of the central nervous system and male reproductive system. Involved in PLA2G3-dependent maturation of mast cells. PLA2G3 is secreted by immature mast cells and acts on nearby fibroblasts upstream to PTDGS to synthesize PGD2, which in turn promotes mast cell maturation and degranulation via PTGDR. This Mus musculus (Mouse) protein is Prostaglandin-H2 D-isomerase (Ptgds).